The primary structure comprises 274 residues: Sulfur carrier protein FdhD (274 aa).

The active-site Cysteine persulfide intermediate is cysteine 121. 258–263 is a Mo-bis(molybdopterin guanine dinucleotide) binding site; sequence FSKPGR.

It belongs to the FdhD family.

It localises to the cytoplasm. Its function is as follows. Required for formate dehydrogenase (FDH) activity. Acts as a sulfur carrier protein that transfers sulfur from IscS to the molybdenum cofactor prior to its insertion into FDH. This chain is Sulfur carrier protein FdhD, found in Yersinia pseudotuberculosis serotype O:3 (strain YPIII).